Consider the following 317-residue polypeptide: 17-beta-hydroxysteroid dehydrogenase type 6 (317 aa).

A signal peptide spans 1–17 (MWLYLAAFVGLYYLLHW). 33-57 (FITGCDSGFGNLLARQLDARGLRVL) serves as a coordination point for NAD(+). Asn-161 carries N-linked (GlcNAc...) asparagine glycosylation. Residue Ser-164 coordinates substrate. Tyr-176 acts as the Proton acceptor in catalysis. N-linked (GlcNAc...) asparagine glycosylation is found at Asn-215 and Asn-256.

It belongs to the short-chain dehydrogenases/reductases (SDR) family. As to expression, detected in liver and prostate (at protein level). Detected in adult liver, lung, brain, placenta, prostate, adrenal gland, testis, mammary gland, spleen, spinal cord and uterus. Detected in caudate nucleus, and at lower levels in amygdala, corpus callosum, hippocampus, substantia nigra and thalamus. Detected in fetal lung, liver and brain.

The protein resides in the microsome membrane. The protein localises to the early endosome membrane. It carries out the reaction all-trans-retinol--[retinol-binding protein] + NAD(+) = all-trans-retinal--[retinol-binding protein] + NADH + H(+). The catalysed reaction is all-trans-retinol + NAD(+) = all-trans-retinal + NADH + H(+). The enzyme catalyses androsterone + NAD(+) = 5alpha-androstan-3,17-dione + NADH + H(+). It catalyses the reaction testosterone + NAD(+) = androst-4-ene-3,17-dione + NADH + H(+). It carries out the reaction 5alpha-androstane-3alpha,17beta-diol + NAD(+) = 17beta-hydroxy-5alpha-androstan-3-one + NADH + H(+). The catalysed reaction is 17beta-estradiol + NAD(+) = estrone + NADH + H(+). The enzyme catalyses 17beta-estradiol + NADP(+) = estrone + NADPH + H(+). It catalyses the reaction 3alpha-hydroxy-5alpha-pregnan-20-one + NAD(+) = 5alpha-pregnane-3,20-dione + NADH + H(+). It carries out the reaction 5alpha-androstane-3beta,17beta-diol + NAD(+) = 17beta-hydroxy-5alpha-androstan-3-one + NADH + H(+). The catalysed reaction is 3beta-hydroxy-5alpha-androstan-17-one + NAD(+) = 5alpha-androstan-3,17-dione + NADH + H(+). In terms of biological role, NAD-dependent oxidoreductase with broad substrate specificity that shows both oxidative and reductive activity (in vitro). Has 17-beta-hydroxysteroid dehydrogenase activity towards various steroids (in vitro). Converts 5-alpha-androstan-3-alpha,17-beta-diol to androsterone and estradiol to estrone (in vitro). Has 3-alpha-hydroxysteroid dehydrogenase activity towards androsterone (in vitro). Has retinol dehydrogenase activity towards all-trans-retinol (in vitro). Can convert androsterone to epi-androsterone. Androsterone is first oxidized to 5-alpha-androstane-3,17-dione and then reduced to epi-andosterone. Can act on both C-19 and C-21 3-alpha-hydroxysteroids. This chain is 17-beta-hydroxysteroid dehydrogenase type 6 (HSD17B6), found in Homo sapiens (Human).